The primary structure comprises 612 residues: Glycosyltransferase 25 family member (612 aa).

The N-terminal stretch at 1-20 (MNKQVIFGLLLACILVCISG) is a signal peptide. N-linked (GlcNAc...) asparagine glycans are attached at residues asparagine 106, asparagine 227, asparagine 263, and asparagine 524. Residues 609-612 (HQEL) carry the Prevents secretion from ER motif.

This sequence belongs to the glycosyltransferase 25 family.

It is found in the endoplasmic reticulum lumen. The polypeptide is Glycosyltransferase 25 family member (Drosophila melanogaster (Fruit fly)).